The primary structure comprises 86 residues: Large ribosomal subunit protein bL27 (86 aa).

The tract at residues 1–24 (MAHKKAMGSTENTRDSNPSYLGVK) is disordered. Positions 9–19 (STENTRDSNPS) are enriched in polar residues.

Belongs to the bacterial ribosomal protein bL27 family.

The polypeptide is Large ribosomal subunit protein bL27 (Salinibacter ruber (strain DSM 13855 / M31)).